The following is a 341-amino-acid chain: tRNA N6-adenosine threonylcarbamoyltransferase (341 aa).

2 residues coordinate Fe cation: His-114 and His-118. Residues 136–140 (LVSGG), Asp-169, Gly-182, Asp-186, and Asn-278 contribute to the substrate site. Position 304 (Asp-304) interacts with Fe cation.

It belongs to the KAE1 / TsaD family. The cofactor is Fe(2+).

The protein localises to the cytoplasm. The catalysed reaction is L-threonylcarbamoyladenylate + adenosine(37) in tRNA = N(6)-L-threonylcarbamoyladenosine(37) in tRNA + AMP + H(+). Functionally, required for the formation of a threonylcarbamoyl group on adenosine at position 37 (t(6)A37) in tRNAs that read codons beginning with adenine. Is involved in the transfer of the threonylcarbamoyl moiety of threonylcarbamoyl-AMP (TC-AMP) to the N6 group of A37, together with TsaE and TsaB. TsaD likely plays a direct catalytic role in this reaction. The polypeptide is tRNA N6-adenosine threonylcarbamoyltransferase (Lactococcus lactis subsp. cremoris (strain SK11)).